A 620-amino-acid polypeptide reads, in one-letter code: FAD-linked oxidoreductase notD (620 aa).

Residues 1–21 (MHYIRELLIVVFTSCPALSYA) form the signal peptide. 3 N-linked (GlcNAc...) asparagine glycosylation sites follow: Asn50, Asn86, and Asn109. The FAD-binding PCMH-type domain maps to 124 to 313 (SQGRIPRYSA…TSVTMPVFGA (190 aa)). Asn403 carries an N-linked (GlcNAc...) asparagine glycan.

It belongs to the oxygen-dependent FAD-linked oxidoreductase family. Requires FAD as cofactor.

It functions in the pathway alkaloid biosynthesis. Its function is as follows. FAD-linked oxidoreductase; part of the gene cluster that mediates the biosynthesis of notoamide, a fungal indole alkaloid that belongs to a family of natural products containing a characteristic bicyclo[2.2.2]diazaoctane core. The first step of notoamide biosynthesis involves coupling of L-proline and L-tryptophan by the bimodular NRPS notE, to produce cyclo-L-tryptophan-L-proline called brevianamide F. The reverse prenyltransferase notF then acts as a deoxybrevianamide E synthase and converts brevianamide F to deoxybrevianamide E via reverse prenylation at C-2 of the indole ring leading to the bicyclo[2.2.2]diazaoctane core. Deoxybrevianamide E is further hydroxylated at C-6 of the indole ring, likely catalyzed by the cytochrome P450 monooxygenase notG, to yield 6-hydroxy-deoxybrevianamide E. 6-hydroxy-deoxybrevianamide E is a specific substrate of the prenyltransferase notC for normal prenylation at C-7 to produce 6-hydroxy-7-prenyl-deoxybrevianamide, also called notoamide S. As the proposed pivotal branching point in notoamide biosynthesis, notoamide S can be diverted to notoamide E through an oxidative pyran ring closure putatively catalyzed by either notH cytochrome P450 monooxygenase or the notD FAD-linked oxidoreductase. This step would be followed by an indole 2,3-epoxidation-initiated pinacol-like rearrangement catalyzed by the notB FAD-dependent monooxygenase leading to the formation of notoamide C and notoamide D. On the other hand notoamide S is converted to notoamide T by notH (or notD), a bifunctional oxidase that also functions as the intramolecular Diels-Alderase responsible for generation of (+)-notoamide T. To generate antipodal (-)-notoaminide T, notH' (or notD') in Aspergillus versicolor is expected to catalyze a Diels-Alder reaction leading to the opposite stereochemistry. The remaining oxidoreductase notD (or notH) likely catalyzes the oxidative pyran ring formation to yield (+)-stephacidin A. The FAD-dependent monooxygenase notI is highly similar to notB and is predicted to catalyze a similar conversion from (+)-stephacidin A to (-)-notoamide B via the 2,3-epoxidation of (+)-stephacidin A followed by a pinacol-type rearrangement. Finally, it remains unclear which enzyme could be responsible for the final hydroxylation steps leading to notoamide A and sclerotiamide. This Aspergillus sp. (strain MF297-2) protein is FAD-linked oxidoreductase notD.